Consider the following 600-residue polypeptide: Probable tripeptidyl-peptidase SED4 (600 aa).

Positions 1–22 are cleaved as a signal peptide; sequence MVSFTLRAIGACLIGLPALITA. A propeptide spans 23–202 (removed in mature form); it reads APTSHVSNGF…SVFTSDLEMT (180 aa). N-linked (GlcNAc...) asparagine glycans are attached at residues N210 and N281. The Peptidase S53 domain maps to 212–600; sequence TITPDCIREL…FEKLSKLVLI (389 aa). Catalysis depends on charge relay system residues E288 and D292. Residues N323 and N404 are each glycosylated (N-linked (GlcNAc...) asparagine). The active-site Charge relay system is the S504. 4 residues coordinate Ca(2+): D546, I547, G579, and D581.

Requires Ca(2+) as cofactor.

Its subcellular location is the secreted. The protein localises to the extracellular space. The enzyme catalyses Release of an N-terminal tripeptide from a polypeptide.. Secreted tripeptidyl-peptidase which degrades proteins at acidic pHs and is involved in virulence. The chain is Probable tripeptidyl-peptidase SED4 (SED4) from Trichophyton verrucosum (strain HKI 0517).